Consider the following 994-residue polypeptide: Bifunctional glutamine synthetase adenylyltransferase/adenylyl-removing enzyme (994 aa).

The adenylyl removase stretch occupies residues 1–487 (MVVTKLATQR…LHTKLFYQPL (487 aa)). The adenylyl transferase stretch occupies residues 492-994 (GPTGLEIAHG…KAVVRKVFGS (503 aa)).

Belongs to the GlnE family. Mg(2+) serves as cofactor.

It catalyses the reaction [glutamine synthetase]-O(4)-(5'-adenylyl)-L-tyrosine + phosphate = [glutamine synthetase]-L-tyrosine + ADP. It carries out the reaction [glutamine synthetase]-L-tyrosine + ATP = [glutamine synthetase]-O(4)-(5'-adenylyl)-L-tyrosine + diphosphate. Involved in the regulation of glutamine synthetase GlnA, a key enzyme in the process to assimilate ammonia. When cellular nitrogen levels are high, the C-terminal adenylyl transferase (AT) inactivates GlnA by covalent transfer of an adenylyl group from ATP to specific tyrosine residue of GlnA, thus reducing its activity. Conversely, when nitrogen levels are low, the N-terminal adenylyl removase (AR) activates GlnA by removing the adenylyl group by phosphorolysis, increasing its activity. The regulatory region of GlnE binds the signal transduction protein PII (GlnB) which indicates the nitrogen status of the cell. This is Bifunctional glutamine synthetase adenylyltransferase/adenylyl-removing enzyme from Mycobacterium tuberculosis (strain CDC 1551 / Oshkosh).